Consider the following 92-residue polypeptide: Bombyxin A-9 (92 aa).

An N-terminal signal peptide occupies residues 1–19; it reads MKLLLAIALMLTTVMWAST. The residue at position 20 (Gln20) is a Pyrrolidone carboxylic acid. 3 disulfides stabilise this stretch: Cys29–Cys79, Cys41–Cys92, and Cys78–Cys83. A propeptide spans 50–71 (c peptide like); that stretch reads SDAQFASYGSAWLMPYSEGRDQ.

This sequence belongs to the insulin family. In terms of assembly, heterodimer of a B chain and an A chain linked by two disulfide bonds.

Its subcellular location is the secreted. Its function is as follows. Brain peptide responsible for activation of prothoracic glands to produce ecdysone in insects. This Bombyx mori (Silk moth) protein is Bombyxin A-9 (BBXA9).